A 571-amino-acid polypeptide reads, in one-letter code: Proline--tRNA ligase (571 aa).

It belongs to the class-II aminoacyl-tRNA synthetase family. ProS type 1 subfamily. In terms of assembly, homodimer.

The protein resides in the cytoplasm. It catalyses the reaction tRNA(Pro) + L-proline + ATP = L-prolyl-tRNA(Pro) + AMP + diphosphate. Catalyzes the attachment of proline to tRNA(Pro) in a two-step reaction: proline is first activated by ATP to form Pro-AMP and then transferred to the acceptor end of tRNA(Pro). As ProRS can inadvertently accommodate and process non-cognate amino acids such as alanine and cysteine, to avoid such errors it has two additional distinct editing activities against alanine. One activity is designated as 'pretransfer' editing and involves the tRNA(Pro)-independent hydrolysis of activated Ala-AMP. The other activity is designated 'posttransfer' editing and involves deacylation of mischarged Ala-tRNA(Pro). The misacylated Cys-tRNA(Pro) is not edited by ProRS. In Vibrio vulnificus (strain CMCP6), this protein is Proline--tRNA ligase.